Consider the following 3491-residue polypeptide: Erythronolide synthase EryA1 (3491 aa).

The tract at residues 1–484 (MSGPRSRTTS…TPRALAEALA (484 aa)) is loading domain. Positions 57–372 (VFVFPGQGAQ…AAQAFTGGVA (316 aa)) are acyltransferase 1. The Acyl-ester intermediate; for acyltransferase 1 activity role is filled by serine 145. The disordered stretch occupies residues 386 to 410 (PALCRSSRRPRRKTSRPSPASTGTR). Over residues 391 to 400 (SSRRPRRKTS) the composition is skewed to basic residues. The 76-residue stretch at 412–487 (RTCCERLLAV…ALAEALAAGT (76 aa)) folds into the Carrier 1 domain. An O-(pantetheine 4'-phosphoryl)serine modification is found at serine 447. Positions 504-928 (GEPVAVVAMA…GTNAHAIIEE (425 aa)) constitute a Ketosynthase family 3 (KS3) 1 domain. Module stretches follow at residues 507–1958 (VAVV…AHLA) and 1982–3404 (IAIV…GFLD). Cysteine 677 (acyl-thioester intermediate; for beta-ketoacyl synthase 1 activity) is an active-site residue. Catalysis depends on for beta-ketoacyl synthase 1 activity residues histidine 812 and histidine 850. Residues 1031–1352 (VFVFPGQGWQ…ALSRAFAAGV (322 aa)) are acyltransferase 2. The active-site Acyl-ester intermediate; for acyltransferase 2 activity is the serine 1128. The interval 1613-1790 (GTVLVTGGTG…ATAVAWGTWA (178 aa)) is beta-ketoacyl reductase 1. Residues 1621-1624 (TGGV), 1644-1647 (SRSG), 1673-1674 (DV), lysine 1723, and 1745-1746 (FS) each bind NADP(+). The active-site For beta-ketoacyl reductase 1 activity is the tyrosine 1760. The 76-residue stretch at 1886–1961 (EALFELVRSH…TLAAHLAAEL (76 aa)) folds into the Carrier 2 domain. Serine 1921 is modified (O-(pantetheine 4'-phosphoryl)serine). The region spanning 1979–2402 (DEPIAIVGMA…GTNAHVIIAE (424 aa)) is the Ketosynthase family 3 (KS3) 2 domain. Cysteine 2148 serves as the catalytic Acyl-thioester intermediate; for beta-ketoacyl synthase 2 activity. Residues histidine 2283 and histidine 2323 each act as for beta-ketoacyl synthase 2 activity in the active site. The acyltransferase 3 stretch occupies residues 2508-2827 (VFVFPGQGAQ…LADAHTRGVA (320 aa)). The active-site Acyl-ester intermediate; for acyltransferase 3 activity is serine 2598. A beta-ketoacyl reductase 2 region spans residues 3057–3233 (GTILVTGGTA…ATSVAWGLWA (177 aa)). NADP(+) is bound by residues 3065–3068 (TAGL), 3088–3091 (SRRG), 3117–3118 (DV), lysine 3168, and 3188–3189 (FS). Tyrosine 3203 serves as the catalytic For beta-ketoacyl reductase 2 activity. One can recognise a Carrier 3 domain in the interval 3329 to 3407 (ERTAELVRLV…AVAGFLDAEL (79 aa)). Serine 3367 is subject to O-(pantetheine 4'-phosphoryl)serine. Residues 3456 to 3491 (QAADASGTGANPSGDDLGEAGVDELLEALGRELDGD) form a disordered region. The span at 3471–3481 (DLGEAGVDELL) shows a compositional bias: acidic residues.

In terms of assembly, homodimer. Erythronolide synthase is composed of EryAI, EryAII and EryAIII multimodular (2 modules) polypeptides each coding for a functional synthase subunit which participates in 2 of the six FAS-like elongation steps required for formation of the polyketide. Module 1, 2, 3, 4, 5, and 6 participating in biosynthesis steps 1, 2, 3, 4, 5, and 6, respectively. Pantetheine 4'-phosphate serves as cofactor.

It catalyses the reaction 6 (S)-methylmalonyl-CoA + propanoyl-CoA + 6 NADPH + 12 H(+) = 6-deoxyerythronolide B + 6 CO2 + 6 NADP(+) + 7 CoA + H2O. The protein operates within antibiotic biosynthesis; erythromycin biosynthesis. Involved in the biosynthesis of antibiotic erythromycin via the biosynthesis of its aglycone precursor, 6-deoxyerythronolide B (6-dEB). The chain is Erythronolide synthase EryA1 (eryA) from Saccharopolyspora erythraea (Streptomyces erythraeus).